Consider the following 243-residue polypeptide: ATP synthase subunit a, chloroplastic (243 aa).

5 consecutive transmembrane segments (helical) span residues 32 to 52 (GQVL…SFVG), 96 to 116 (TVFL…WALI), 129 to 149 (DINT…YAGI), 195 to 215 (LVVG…IMLL), and 216 to 236 (GCFT…AYIG).

It belongs to the ATPase A chain family. In terms of assembly, F-type ATPases have 2 components, CF(1) - the catalytic core - and CF(0) - the membrane proton channel. CF(1) has five subunits: alpha(3), beta(3), gamma(1), delta(1), epsilon(1). CF(0) has four main subunits: a, b, b' and c.

The protein localises to the plastid. The protein resides in the chloroplast thylakoid membrane. Its function is as follows. Key component of the proton channel; it plays a direct role in the translocation of protons across the membrane. In Tetradesmus obliquus (Green alga), this protein is ATP synthase subunit a, chloroplastic.